We begin with the raw amino-acid sequence, 945 residues long: Isoleucine--tRNA ligase (945 aa).

Positions proline 66 to histidine 76 match the 'HIGH' region motif. Glutamate 581 is a binding site for L-isoleucyl-5'-AMP. Positions lysine 622 to serine 626 match the 'KMSKS' region motif. Lysine 625 is a binding site for ATP. Residues cysteine 908, cysteine 911, cysteine 928, and cysteine 931 each coordinate Zn(2+).

It belongs to the class-I aminoacyl-tRNA synthetase family. IleS type 1 subfamily. As to quaternary structure, monomer. It depends on Zn(2+) as a cofactor.

The protein localises to the cytoplasm. The catalysed reaction is tRNA(Ile) + L-isoleucine + ATP = L-isoleucyl-tRNA(Ile) + AMP + diphosphate. In terms of biological role, catalyzes the attachment of isoleucine to tRNA(Ile). As IleRS can inadvertently accommodate and process structurally similar amino acids such as valine, to avoid such errors it has two additional distinct tRNA(Ile)-dependent editing activities. One activity is designated as 'pretransfer' editing and involves the hydrolysis of activated Val-AMP. The other activity is designated 'posttransfer' editing and involves deacylation of mischarged Val-tRNA(Ile). This is Isoleucine--tRNA ligase from Burkholderia vietnamiensis (strain G4 / LMG 22486) (Burkholderia cepacia (strain R1808)).